A 689-amino-acid chain; its full sequence is Translation initiation factor IF-2 (689 aa).

The segment at 70-107 (VRSKKNSNKKKKKGKGNQDKRQENFAGKQQAQTVETPD) is disordered. The segment covering 71 to 84 (RSKKNSNKKKKKGK) has biased composition (basic residues). A tr-type G domain is found at 191–360 (ERPAVVTIMG…LLVSEVEEYK (170 aa)). The tract at residues 200-207 (GHVDHGKT) is G1. GTP is bound at residue 200–207 (GHVDHGKT). The G2 stretch occupies residues 225–229 (GITQH). Residues 246 to 249 (DTPG) form a G3 region. GTP-binding positions include 246-250 (DTPGH) and 300-303 (NKMD). A G4 region spans residues 300-303 (NKMD). Residues 336–338 (SAI) form a G5 region.

This sequence belongs to the TRAFAC class translation factor GTPase superfamily. Classic translation factor GTPase family. IF-2 subfamily.

It localises to the cytoplasm. Functionally, one of the essential components for the initiation of protein synthesis. Protects formylmethionyl-tRNA from spontaneous hydrolysis and promotes its binding to the 30S ribosomal subunits. Also involved in the hydrolysis of GTP during the formation of the 70S ribosomal complex. In Bacillus cytotoxicus (strain DSM 22905 / CIP 110041 / 391-98 / NVH 391-98), this protein is Translation initiation factor IF-2.